The primary structure comprises 385 residues: 28S rRNA (uridine-N(3))-methyltransferase (385 aa).

2 disordered regions span residues 1–35 (MAERPRKRPCGPGEHGQRVEWRKWKQQKKEEKKKW) and 47–72 (QRAQEEEAKRQEEEEEAAAQRSNQGR). Composition is skewed to basic and acidic residues over residues 15–35 (HGQRVEWRKWKQQKKEEKKKW) and 47–58 (QRAQEEEAKRQE). Residues R293, G313, N342, and T343 each coordinate S-adenosyl-L-methionine.

It belongs to the class IV-like SAM-binding methyltransferase superfamily. In terms of assembly, interacts with INCA1.

It localises to the cytoplasm. Its subcellular location is the cytoskeleton. The protein localises to the spindle. The protein resides in the chromosome. It is found in the centromere. It localises to the kinetochore. Its subcellular location is the microtubule organizing center. The protein localises to the centrosome. The enzyme catalyses uridine in 28S rRNA + S-adenosyl-L-methionine = N(3)-methyluridine in 28S rRNA + S-adenosyl-L-homocysteine + H(+). S-adenosyl-L-methionine-dependent methyltransferase that specifically methylates the N3 position of a uridine in 28S rRNA. Required for association of the centrosomes with the poles of the bipolar mitotic spindle during metaphase. Also involved in chromosome alignment. May promote centrosome maturation probably by recruiting A-kinase anchor protein AKAP9 to centrosomes in early mitosis. Binds specifically to miRNA MIR145 hairpin, regulates MIR145 expression at a postranscriptional level. The protein is 28S rRNA (uridine-N(3))-methyltransferase of Mus musculus (Mouse).